The following is a 740-amino-acid chain: Ribosomal protein S6 kinase alpha-3 (740 aa).

The tract at residues 1-38 is disordered; it reads MPLAQLADPWQKMAVESPSDSAENGQQIMDEPMGEEEI. The segment covering 18–27 has biased composition (polar residues); that stretch reads PSDSAENGQQ. One can recognise a Protein kinase 1 domain in the interval 68 to 327; it reads FELLKVLGQG…VEEIKRHSFF (260 aa). ATP contacts are provided by residues 74 to 82 and lysine 100; that span reads LGQGSFGKV. The active-site Proton acceptor is aspartate 193. A Phosphoserine; by PDPK1 modification is found at serine 227. Positions 328 to 397 constitute an AGC-kinase C-terminal domain; that stretch reads STIDWNKLYR…VAITSDDESQ (70 aa). At threonine 365 the chain carries Phosphothreonine. Serine 369 and serine 375 each carry phosphoserine. Serine 386 carries the phosphoserine; by autocatalysis and MAPKAPK2 modification. A Phosphoserine modification is found at serine 415. Positions 422-679 constitute a Protein kinase 2 domain; the sequence is YEVKEDIGVG…AALVLRHPWI (258 aa). ATP is bound by residues 428 to 436 and lysine 451; that span reads IGVGSYSVC. A Phosphotyrosine; by FGFR3 modification is found at tyrosine 529. Aspartate 539 functions as the Proton acceptor in the catalytic mechanism. A phosphoserine mark is found at serine 556 and serine 715.

It belongs to the protein kinase superfamily. AGC Ser/Thr protein kinase family. S6 kinase subfamily. Forms a complex with either MAPK1/ERK2 or MAPK3/ERK1 in quiescent cells. Transiently dissociates following mitogenic stimulation. Interacts with NFATC4, ETV1/ER81 and FGFR1. It depends on Mg(2+) as a cofactor. In terms of processing, activated by phosphorylation at Ser-227 by PDPK1. Autophosphorylated on Ser-386, as part of the activation process. May be phosphorylated at Thr-365 and Ser-369 by MAPK1/ERK2 and MAPK3/ERK1. Can also be activated via phosphorylation at Ser-386 by MAPKAPK2. N-terminal myristoylation results in an activated kinase in the absence of added growth factors. In terms of tissue distribution, expressed in many tissues, highest levels in skeletal muscle.

It localises to the nucleus. Its subcellular location is the cytoplasm. It catalyses the reaction L-seryl-[protein] + ATP = O-phospho-L-seryl-[protein] + ADP + H(+). The enzyme catalyses L-threonyl-[protein] + ATP = O-phospho-L-threonyl-[protein] + ADP + H(+). Its activity is regulated as follows. Upon extracellular signal or mitogen stimulation, phosphorylated at Thr-577 in the C-terminal kinase domain (CTKD) by MAPK1/ERK2 and MAPK3/ERK1. The activated CTKD then autophosphorylates Ser-386, allowing binding of PDPK1, which in turn phosphorylates Ser-227 in the N-terminal kinase domain (NTDK) leading to the full activation of the protein and subsequent phosphorylation of the substrates by the NTKD. In terms of biological role, serine/threonine-protein kinase that acts downstream of ERK (MAPK1/ERK2 and MAPK3/ERK1) signaling and mediates mitogenic and stress-induced activation of the transcription factors CREB1, ETV1/ER81 and NR4A1/NUR77, regulates translation through RPS6 and EIF4B phosphorylation, and mediates cellular proliferation, survival, and differentiation by modulating mTOR signaling and repressing pro-apoptotic function of BAD and DAPK1. In fibroblast, is required for EGF-stimulated phosphorylation of CREB1 and histone H3 at 'Ser-10', which results in the subsequent transcriptional activation of several immediate-early genes. In response to mitogenic stimulation (EGF and PMA), phosphorylates and activates NR4A1/NUR77 and ETV1/ER81 transcription factors and the cofactor CREBBP. Upon insulin-derived signal, acts indirectly on the transcription regulation of several genes by phosphorylating GSK3B at 'Ser-9' and inhibiting its activity. Phosphorylates RPS6 in response to serum or EGF via an mTOR-independent mechanism and promotes translation initiation by facilitating assembly of the preinitiation complex. In response to insulin, phosphorylates EIF4B, enhancing EIF4B affinity for the EIF3 complex and stimulating cap-dependent translation. Is involved in the mTOR nutrient-sensing pathway by directly phosphorylating TSC2 at 'Ser-1798', which potently inhibits TSC2 ability to suppress mTOR signaling, and mediates phosphorylation of RPTOR, which regulates mTORC1 activity and may promote rapamycin-sensitive signaling independently of the PI3K/AKT pathway. Mediates cell survival by phosphorylating the pro-apoptotic proteins BAD and DAPK1 and suppressing their pro-apoptotic function. Promotes the survival of hepatic stellate cells by phosphorylating CEBPB in response to the hepatotoxin carbon tetrachloride (CCl4). Is involved in cell cycle regulation by phosphorylating the CDK inhibitor CDKN1B, which promotes CDKN1B association with 14-3-3 proteins and prevents its translocation to the nucleus and inhibition of G1 progression. In LPS-stimulated dendritic cells, is involved in TLR4-induced macropinocytosis, and in myeloma cells, acts as effector of FGFR3-mediated transformation signaling, after direct phosphorylation at Tyr-529 by FGFR3. Negatively regulates EGF-induced MAPK1/3 phosphorylation via phosphorylation of SOS1. Phosphorylates SOS1 at 'Ser-1134' and 'Ser-1161' that create YWHAB and YWHAE binding sites and which contribute to the negative regulation of MAPK1/3 phosphorylation. Phosphorylates EPHA2 at 'Ser-897', the RPS6KA-EPHA2 signaling pathway controls cell migration. Acts as a regulator of osteoblast differentiation by mediating phosphorylation of ATF4, thereby promoting ATF4 transactivation activity. In Homo sapiens (Human), this protein is Ribosomal protein S6 kinase alpha-3 (RPS6KA3).